Reading from the N-terminus, the 265-residue chain is Putative pyruvate, phosphate dikinase regulatory protein 2 (265 aa).

Residue 150-157 participates in ADP binding; the sequence is GVSRTSKT.

This sequence belongs to the pyruvate, phosphate/water dikinase regulatory protein family. PDRP subfamily.

It carries out the reaction N(tele)-phospho-L-histidyl/L-threonyl-[pyruvate, phosphate dikinase] + ADP = N(tele)-phospho-L-histidyl/O-phospho-L-threonyl-[pyruvate, phosphate dikinase] + AMP + H(+). The enzyme catalyses N(tele)-phospho-L-histidyl/O-phospho-L-threonyl-[pyruvate, phosphate dikinase] + phosphate + H(+) = N(tele)-phospho-L-histidyl/L-threonyl-[pyruvate, phosphate dikinase] + diphosphate. Bifunctional serine/threonine kinase and phosphorylase involved in the regulation of the pyruvate, phosphate dikinase (PPDK) by catalyzing its phosphorylation/dephosphorylation. This chain is Putative pyruvate, phosphate dikinase regulatory protein 2, found in Latilactobacillus sakei subsp. sakei (strain 23K) (Lactobacillus sakei subsp. sakei).